The chain runs to 888 residues: Tyrosine-protein kinase receptor UFO (888 aa).

The first 18 residues, 1-18, serve as a signal peptide directing secretion; the sequence is MGRVPLAWWLALCCWGCA. The interaction with GAS6 stretch occupies residues 19 to 86; it reads AHKDTQTEAG…QTQVPLGEDW (68 aa). At 19-445 the chain is on the extracellular side; that stretch reads AHKDTQTEAG…PPRAFSWPWW (427 aa). Ig-like C2-type domains lie at 30–122 and 133–216; these read PFVG…TFVS and PYFL…ATIT. N-linked (GlcNAc...) asparagine glycosylation occurs at Asn37. The cysteines at positions 50 and 111 are disulfide-linked. N-linked (GlcNAc...) asparagine glycosylation is found at Asn151 and Asn192. Residues Cys154 and Cys199 are joined by a disulfide bond. Fibronectin type-III domains lie at 221-325 and 330-422; these read RPHH…TTEG and PPEN…PWRP. N-linked (GlcNAc...) asparagine glycosylation is found at Asn333, Asn339, and Asn395. The chain crosses the membrane as a helical span at residues 446–466; the sequence is YVLLGALVAAACVLILALFLV. The Cytoplasmic portion of the chain corresponds to 467–888; the sequence is HRRKKETRYG…PAPPGQEDGA (422 aa). The Protein kinase domain maps to 530 to 801; the sequence is VALGKTLGEG…ELREDLENTL (272 aa). Residues 536 to 544 and Lys561 contribute to the ATP site; that span reads LGEGEFGAV. The active-site Proton acceptor is the Asp666. Tyr697, Tyr773, and Tyr815 each carry phosphotyrosine; by autocatalysis. The interval 820–846 is disordered; sequence EGGSHLEPRGAAGGADPPTQPDPKDSC. At Tyr860 the chain carries Phosphotyrosine; by autocatalysis. Residues 865–888 are disordered; sequence STAPGPTLSADRGCPAPPGQEDGA.

It belongs to the protein kinase superfamily. Tyr protein kinase family. AXL/UFO subfamily. As to quaternary structure, heterodimer and heterotetramer with ligand GAS6. Interacts with CBL, GRB2, LCK, NCK2, PIK3R1, PIK3R2, PIK3R3, PLCG1, SOCS1 and TNS2. Part of a complex including AXL, TNK2 and GRB2, in which GRB2 promotes AXL recruitment by TNK2. Monoubiquitinated upon GAS6-binding. A very small proportion of the receptor could be subjected to polyubiquitination in a very transient fashion. Post-translationally, phosphorylated at tyrosine residues by autocatalysis, which activates kinase activity. In distinct substructures of a broad spectrum of developing tissues (in the late embryogenesis). In cells forming organ capsules as well as in connective tissue structures (in adult).

It is found in the cell membrane. It carries out the reaction L-tyrosyl-[protein] + ATP = O-phospho-L-tyrosyl-[protein] + ADP + H(+). Activated by GAS6-binding and subsequent autophosphorylation. Functionally, receptor tyrosine kinase that transduces signals from the extracellular matrix into the cytoplasm by binding growth factor GAS6 and which is thus regulating many physiological processes including cell survival, cell proliferation, migration and differentiation. Ligand binding at the cell surface induces dimerization and autophosphorylation of AXL. Following activation by ligand, AXL binds and induces tyrosine phosphorylation of PI3-kinase subunits PIK3R1, PIK3R2 and PIK3R3; but also GRB2, PLCG1, LCK and PTPN11. Other downstream substrate candidates for AXL are CBL, NCK2, SOCS1 and TNS2. Recruitment of GRB2 and phosphatidylinositol 3 kinase regulatory subunits by AXL leads to the downstream activation of the AKT kinase. GAS6/AXL signaling plays a role in various processes such as endothelial cell survival during acidification by preventing apoptosis, optimal cytokine signaling during human natural killer cell development, hepatic regeneration, gonadotropin-releasing hormone neuron survival and migration, platelet activation, or regulation of thrombotic responses. Also plays an important role in inhibition of Toll-like receptors (TLRs)-mediated innate immune response. The polypeptide is Tyrosine-protein kinase receptor UFO (Axl) (Mus musculus (Mouse)).